The primary structure comprises 226 residues: Cytidylate kinase (226 aa).

10–18 is a binding site for ATP; it reads GPASSGKST.

The protein belongs to the cytidylate kinase family. Type 1 subfamily.

It is found in the cytoplasm. The catalysed reaction is CMP + ATP = CDP + ADP. The enzyme catalyses dCMP + ATP = dCDP + ADP. This chain is Cytidylate kinase, found in Streptococcus pyogenes serotype M1.